The following is a 566-amino-acid chain: Beta-1,2-xylosyltransferease XAX1 (566 aa).

Residues 1–25 (MTSTAYSRPSKLPGGGNGSDRRLPP) form a disordered region. Residues 1-43 (MTSTAYSRPSKLPGGGNGSDRRLPPRLMRGLTTKIEPKKLGVG) are Cytoplasmic-facing. Residues 44–64 (LLAGCCLALLTYVSLAKLFAI) traverse the membrane as a helical; Signal-anchor for type II membrane protein segment. The Lumenal segment spans residues 65–566 (YSPVFASTAN…LLQALDRLQQ (502 aa)). A glycan (N-linked (GlcNAc...) asparagine) is linked at asparagine 74. The disordered stretch occupies residues 78–180 (LMQNSPPSSP…AAGGDTKIKC (103 aa)). Pro residues predominate over residues 84–94 (PSSPETGPIPP). N-linked (GlcNAc...) asparagine glycosylation is found at asparagine 104, asparagine 368, asparagine 429, asparagine 515, and asparagine 549.

It belongs to the glycosyltransferase 61 family. In terms of tissue distribution, highly expressed in young panicles.

It localises to the golgi apparatus membrane. The protein operates within glycan metabolism. Its function is as follows. Glycosyltransferase involved in the xylosylation of xylan, the major hemicellulose (non-cellulosic component) of primary and secondary walls of angiosperms. Possesses beta-1,2-xylosyltransferase activity, transferring xylose from UDP-xylose to the xylan backbone. The polypeptide is Beta-1,2-xylosyltransferease XAX1 (Oryza sativa subsp. japonica (Rice)).